We begin with the raw amino-acid sequence, 184 residues long: Large ribosomal subunit protein uL6 (184 aa).

It belongs to the universal ribosomal protein uL6 family. Part of the 50S ribosomal subunit.

In terms of biological role, this protein binds to the 23S rRNA, and is important in its secondary structure. It is located near the subunit interface in the base of the L7/L12 stalk, and near the tRNA binding site of the peptidyltransferase center. The protein is Large ribosomal subunit protein uL6 of Amoebophilus asiaticus (strain 5a2).